A 580-amino-acid chain; its full sequence is Arginine--tRNA ligase (580 aa).

The short motif at 137–147 (ANPTGPLHIGH) is the 'HIGH' region element.

The protein belongs to the class-I aminoacyl-tRNA synthetase family. Monomer.

Its subcellular location is the cytoplasm. It carries out the reaction tRNA(Arg) + L-arginine + ATP = L-arginyl-tRNA(Arg) + AMP + diphosphate. The protein is Arginine--tRNA ligase of Anaplasma phagocytophilum (strain HZ).